We begin with the raw amino-acid sequence, 1032 residues long: Exportin-T (1032 aa).

It belongs to the exportin family.

Its subcellular location is the nucleus. It is found in the cytoplasm. Functionally, tRNA nucleus export receptor which facilitates tRNA translocation across the nuclear pore complex. Involved in pre-tRNA splicing, probably by affecting the interaction of pre-tRNA with splicing endonuclease. This Aspergillus fumigatus (strain CBS 144.89 / FGSC A1163 / CEA10) (Neosartorya fumigata) protein is Exportin-T (los1).